We begin with the raw amino-acid sequence, 179 residues long: Large ribosomal subunit protein uL6 (179 aa).

The protein belongs to the universal ribosomal protein uL6 family. In terms of assembly, part of the 50S ribosomal subunit.

Its function is as follows. This protein binds to the 23S rRNA, and is important in its secondary structure. It is located near the subunit interface in the base of the L7/L12 stalk, and near the tRNA binding site of the peptidyltransferase center. In Chlorobium phaeovibrioides (strain DSM 265 / 1930) (Prosthecochloris vibrioformis (strain DSM 265)), this protein is Large ribosomal subunit protein uL6.